Consider the following 439-residue polypeptide: U1 small nuclear ribonucleoprotein 70 kDa (439 aa).

Residue Thr-2 is modified to N-acetylthreonine. The tract at residues 48–79 (FEDPRDAPPPTRAETREERMERKRREKIERRQ) is disordered. A compositionally biased stretch (basic and acidic residues) spans 60–79 (AETREERMERKRREKIERRQ). Residues 92-202 (HNDPNAQGDA…GGGLGGTRRG (111 aa)) are required for interaction with U1 RNA. Residues 103–181 (KTLFVARVNY…RRVLVDVERG (79 aa)) form the RRM domain. Residue Lys-118 is modified to N6-acetyllysine. The residue at position 126 (Tyr-126) is a Phosphotyrosine. Residues 187 to 439 (WRPRRLGGGL…NGYLMEAAPE (253 aa)) form a disordered region. Positions 192–201 (LGGGLGGTRR) are enriched in gly residues. The segment covering 207-254 (NIRHSGRDDTSRYDERPGPSPLPHRDRDRDRERERRERSRERDKERER) has biased composition (basic and acidic residues). Ser-226 and Ser-268 each carry phosphoserine. Basic residues predominate over residues 255–268 (RRSRSRDRRRRSRS). Basic and acidic residues-rich tracts occupy residues 269–286 (RDKE…DKDR) and 294–310 (RSRE…EELR). Position 323 is a phosphoserine (Ser-323). The span at 346–394 (PEEKGRDRDRDRRRSHRSERERRRDRDRDRDREHKRGERGGDRGRDEAR) shows a compositional bias: basic and acidic residues. A Glycyl lysine isopeptide (Lys-Gly) (interchain with G-Cter in SUMO2) cross-link involves residue Lys-349. The span at 395-410 (GGGGGGQDNGLEGLGN) shows a compositional bias: gly residues.

Component of the U1 snRNP. The U1 snRNP is composed of the U1 snRNA and the 7 core Sm proteins SNRPB, SNRPD1, SNRPD2, SNRPD3, SNRPE, SNRPF and SNRPG that assemble in a heptameric protein ring on the Sm site of the small nuclear RNA to form the core snRNP, and at least three U1 snRNP-specific proteins SNRNP70/U1-70K, SNRPA/U1-A and SNRPC/U1-C. Interacts with SCNM1. Found in a pre-mRNA splicing complex with SFRS4, SFRS5, SNRNP70, SNRPA1, SRRM1 and SRRM2. Found in a pre-mRNA exonic splicing enhancer (ESE) complex with SNRNP70, SNRPA1, SRRM1 and TRA2B/SFRS10. Interacts with dephosphorylated SFRS13A and SFPQ. Interacts with NUDT21/CPSF5, CPSF6, SCAF11, and ZRANB2. Interacts with GEMIN5. Interacts with FUS. In terms of processing, extensively phosphorylated on serine residues in the C-terminal region.

It localises to the nucleus speckle. Its subcellular location is the nucleus. The protein resides in the nucleoplasm. Functionally, component of the spliceosomal U1 snRNP, which is essential for recognition of the pre-mRNA 5' splice-site and the subsequent assembly of the spliceosome. SNRNP70 binds to the loop I region of U1-snRNA. This is U1 small nuclear ribonucleoprotein 70 kDa (SNRNP70) from Bos taurus (Bovine).